Reading from the N-terminus, the 490-residue chain is Probable glycine dehydrogenase (decarboxylating) subunit 2 (490 aa).

At K273 the chain carries N6-(pyridoxal phosphate)lysine.

It belongs to the GcvP family. C-terminal subunit subfamily. As to quaternary structure, the glycine cleavage system is composed of four proteins: P, T, L and H. In this organism, the P 'protein' is a heterodimer of two subunits. Pyridoxal 5'-phosphate serves as cofactor.

It catalyses the reaction N(6)-[(R)-lipoyl]-L-lysyl-[glycine-cleavage complex H protein] + glycine + H(+) = N(6)-[(R)-S(8)-aminomethyldihydrolipoyl]-L-lysyl-[glycine-cleavage complex H protein] + CO2. Functionally, the glycine cleavage system catalyzes the degradation of glycine. The P protein binds the alpha-amino group of glycine through its pyridoxal phosphate cofactor; CO(2) is released and the remaining methylamine moiety is then transferred to the lipoamide cofactor of the H protein. The protein is Probable glycine dehydrogenase (decarboxylating) subunit 2 of Staphylococcus aureus (strain Newman).